The chain runs to 583 residues: Complement factor I (583 aa).

Positions 1–18 (MKLLHVFLLFLCFHLSFC) are cleaved as a signal peptide. 16 cysteine pairs are disulfide-bonded: Cys-33/Cys-255, Cys-43/Cys-54, Cys-48/Cys-59, Cys-61/Cys-93, Cys-67/Cys-86, Cys-75/Cys-106, Cys-141/Cys-181, Cys-154/Cys-214, Cys-186/Cys-196, Cys-229/Cys-247, Cys-259/Cys-271, Cys-266/Cys-284, Cys-278/Cys-293, Cys-327/Cys-453, Cys-365/Cys-381, and Cys-373/Cys-444. The 54-residue stretch at 55–108 (IEGTCICKLPYQCPKNGTTVCATNGRSFPTYCQQKSLECLRPGTKFLNNGTCTA) folds into the Kazal-like domain. N-linked (GlcNAc...) asparagine glycosylation is found at Asn-70, Asn-103, Asn-173, and Asn-177. Positions 114–212 (VSLKHGNTDS…TMGYQDLADV (99 aa)) constitute an SRCR domain. 2 LDL-receptor class A domains span residues 213 to 257 (VCYT…LCCK) and 258 to 294 (ACQG…VGCE). Ca(2+) contacts are provided by Lys-239, Asp-242, Ile-244, Asp-246, Asp-252, and Glu-253. Ca(2+) is bound by residues Tyr-276, Asn-279, Glu-281, Asp-283, Asp-289, and Glu-290. The 235-residue stretch at 340-574 (IVGGKRAQLG…YFDWISYHVG (235 aa)) folds into the Peptidase S1 domain. Catalysis depends on charge relay system residues His-380 and Asp-429. Residues Asn-464 and Asn-494 are each glycosylated (N-linked (GlcNAc...) asparagine). Cystine bridges form between Cys-467/Cys-531, Cys-495/Cys-510, and Cys-521/Cys-550. Ser-525 functions as the Charge relay system in the catalytic mechanism. N-linked (GlcNAc...) asparagine glycosylation occurs at Asn-536.

The protein belongs to the peptidase S1 family. As to quaternary structure, heterodimer of a light and heavy chains; disulfide-linked. The fully processed and mature protein circulates as a zymogen, and is allosterically activated by substrate-induced remodeling of the active site. Plasma.

It is found in the secreted. Its subcellular location is the extracellular space. The enzyme catalyses Inactivates complement subcomponents C3b, iC3b and C4b by proteolytic cleavage.. Its function is as follows. Responsible for cleaving the alpha-chains of C4b and C3b in the presence of the cofactors C4-binding protein and factor H respectively. This is Complement factor I (CFI) from Pongo abelii (Sumatran orangutan).